The following is a 208-amino-acid chain: Probable GTP-binding protein EngB (208 aa).

Residues 23–205 (LTSEMVVLGR…RQTLLKHLLT (183 aa)) enclose the EngB-type G domain. Residues 31–38 (GRSNVGKS), 57–61 (GKTRL), 84–87 (DLPG), 154–157 (TKFD), and 182–184 (FNA) each bind GTP. Mg(2+)-binding residues include Ser38 and Thr59.

Belongs to the TRAFAC class TrmE-Era-EngA-EngB-Septin-like GTPase superfamily. EngB GTPase family. Requires Mg(2+) as cofactor.

Necessary for normal cell division and for the maintenance of normal septation. This chain is Probable GTP-binding protein EngB, found in Helicobacter pylori (strain ATCC 700392 / 26695) (Campylobacter pylori).